A 40-amino-acid chain; its full sequence is Thioredoxin (40 aa).

A disulfide bond links Cys-29 and Cys-32.

Belongs to the thioredoxin family.

In terms of biological role, participates in various redox reactions through the reversible oxidation of its active center dithiol to a disulfide and catalyzes dithiol-disulfide exchange reactions. This chain is Thioredoxin (trxA), found in Clostridium sporogenes.